Consider the following 954-residue polypeptide: Bifunctional glutamine synthetase adenylyltransferase/adenylyl-removing enzyme (954 aa).

The interval 1–452 (MAVQKDSNKS…HFKATVGGEE (452 aa)) is adenylyl removase. The segment at 458 to 954 (EHWTAQLWNV…ILAIYQAILE (497 aa)) is adenylyl transferase.

Belongs to the GlnE family. The cofactor is Mg(2+).

It carries out the reaction [glutamine synthetase]-O(4)-(5'-adenylyl)-L-tyrosine + phosphate = [glutamine synthetase]-L-tyrosine + ADP. The catalysed reaction is [glutamine synthetase]-L-tyrosine + ATP = [glutamine synthetase]-O(4)-(5'-adenylyl)-L-tyrosine + diphosphate. In terms of biological role, involved in the regulation of glutamine synthetase GlnA, a key enzyme in the process to assimilate ammonia. When cellular nitrogen levels are high, the C-terminal adenylyl transferase (AT) inactivates GlnA by covalent transfer of an adenylyl group from ATP to specific tyrosine residue of GlnA, thus reducing its activity. Conversely, when nitrogen levels are low, the N-terminal adenylyl removase (AR) activates GlnA by removing the adenylyl group by phosphorolysis, increasing its activity. The regulatory region of GlnE binds the signal transduction protein PII (GlnB) which indicates the nitrogen status of the cell. The sequence is that of Bifunctional glutamine synthetase adenylyltransferase/adenylyl-removing enzyme from Shewanella oneidensis (strain ATCC 700550 / JCM 31522 / CIP 106686 / LMG 19005 / NCIMB 14063 / MR-1).